Here is a 725-residue protein sequence, read N- to C-terminus: MRLSDQVSPAGPDPSHDMNLDATSDPMNLDDFIVPFDSPAEHSAHPSVDRNFAATPTGSIPIKSRKDHAMTDSSTAASFPHPPQDQRTNSEFGYVPRRVRKTSVDERQFFAGLSVPTRKRPAEASPQVPPVSNAMMAHSSELSAALPDYSLDHHLLLLLFLAMAQWAPPTSSPSHAFQHSLRLDTYGINEDHGLNSAGPYQQNFHFSPSDSPMTAGNPFSSLYAQTPLASSLNSTEFFSPPPSGYQSTVSTPQPIYEGEQSIFFSDAPSAESHTQRRIPNYIQQRQSNLSASLQPRYMYNMSNGESHPGSAVTGPPTTNMSGFSVPQHVNPSQVLGHGEFSTTAPASSMFTFGGDSDNEDDDGNFGERGGITMPNDFASLDESVDMSAGLHWDGGFPGSVQSLPGFSAQTRKHVTIGSTDMIDGPLEWNQGGTLGRAHGSAASVSEVRNQNQDPRRYGKVPRTASTPNAAALLRQSLNGSASGLPTNHPSPSTLPESGLSSRCLPARQPGGLKNGSTNAGPEPACTNCFTQTTPLWRRNPEGQPLCNACGLFLKLHGVVRPLSLKTDVIKKRNRSSANTLTVGTSRSSKKSSRKNSIQHAPSTSISSRMNTSESPPSINGSSTLGKPGVVPIAAAPPKSGPPAGVAQARAGVQVAPRRQRRLEKAPAGSEPDADDSPKSAAPPSRSKVVPLAPAMAPPAAANPANHSIAGGQGASQEWEWLTMSL.

Disordered regions lie at residues 1 to 90 (MRLS…RTNS), 429 to 464 (NQGG…PRTA), and 479 to 524 (GSAS…PEPA). Positions 39-48 (PAEHSAHPSV) are enriched in basic and acidic residues. Polar residues-rich tracts occupy residues 442-452 (ASVSEVRNQNQ) and 479-500 (GSAS…SGLS). The GATA-type zinc-finger motif lies at 525-549 (CTNCFTQTTPLWRRNPEGQPLCNAC). Positions 574–714 (RSSANTLTVG…NHSIAGGQGA (141 aa)) are disordered. Polar residues-rich tracts occupy residues 575–584 (SSANTLTVGT) and 597–624 (IQHA…SSTL). 2 stretches are compositionally biased toward low complexity: residues 631–656 (PIAA…QVAP) and 678–704 (KSAA…ANPA).

The protein localises to the nucleus. Its function is as follows. Major nitrogen regulatory protein. The chain is Nitrogen regulatory protein areA (AREA) from Penicillium chrysogenum (Penicillium notatum).